We begin with the raw amino-acid sequence, 57 residues long: UPF0057 membrane protein T23F2.3 (57 aa).

2 helical membrane-spanning segments follow: residues 4 to 24 (TCTD…GVFL) and 36 to 56 (ILLT…VILA).

The protein belongs to the UPF0057 (PMP3) family.

It localises to the membrane. This is UPF0057 membrane protein T23F2.3 from Caenorhabditis elegans.